We begin with the raw amino-acid sequence, 188 residues long: Elongation factor P (188 aa).

The protein belongs to the elongation factor P family.

The protein resides in the cytoplasm. Its pathway is protein biosynthesis; polypeptide chain elongation. Involved in peptide bond synthesis. Stimulates efficient translation and peptide-bond synthesis on native or reconstituted 70S ribosomes in vitro. Probably functions indirectly by altering the affinity of the ribosome for aminoacyl-tRNA, thus increasing their reactivity as acceptors for peptidyl transferase. The protein is Elongation factor P of Wolbachia sp. subsp. Brugia malayi (strain TRS).